Reading from the N-terminus, the 341-residue chain is Uroporphyrinogen decarboxylase (341 aa).

Residues 23-27, Asp73, Tyr148, Ser203, and His318 contribute to the substrate site; that span reads RQAGR.

The protein belongs to the uroporphyrinogen decarboxylase family. In terms of assembly, homodimer.

Its subcellular location is the cytoplasm. The catalysed reaction is uroporphyrinogen III + 4 H(+) = coproporphyrinogen III + 4 CO2. Its pathway is porphyrin-containing compound metabolism; protoporphyrin-IX biosynthesis; coproporphyrinogen-III from 5-aminolevulinate: step 4/4. Catalyzes the decarboxylation of four acetate groups of uroporphyrinogen-III to yield coproporphyrinogen-III. The sequence is that of Uroporphyrinogen decarboxylase from Brucella ovis (strain ATCC 25840 / 63/290 / NCTC 10512).